The following is a 229-amino-acid chain: Large ribosomal subunit protein bL25 (229 aa).

2 disordered regions span residues 1 to 21 and 182 to 229; these read MDIIKLNATRREDSGKSASSR and NAPE…KDKK. Over residues 195-222 the composition is skewed to low complexity; sequence PAAGAPAAGAAAAPAAGAAAPAKGAAPA.

Belongs to the bacterial ribosomal protein bL25 family. CTC subfamily. Part of the 50S ribosomal subunit; part of the 5S rRNA/L5/L18/L25 subcomplex. Contacts the 5S rRNA. Binds to the 5S rRNA independently of L5 and L18.

In terms of biological role, this is one of the proteins that binds to the 5S RNA in the ribosome where it forms part of the central protuberance. The chain is Large ribosomal subunit protein bL25 from Sorangium cellulosum (strain So ce56) (Polyangium cellulosum (strain So ce56)).